A 180-amino-acid polypeptide reads, in one-letter code: MANRLKEKYLNEVVPALTEQFNYSSVMAVPKVDKIVLNMGVGDAVSNAKNLEKAAQELALISGQKPLITKAKKSIAGFRLREGVAIGAKVTLRGERMYEFLDKLVTVSLPRVRDFHGVPTKSFDGRGNYTLGVKEQLIFPEINFDDVDKTRGMDIVIVTTANTDEESRALLTGLGMPFAK.

Belongs to the universal ribosomal protein uL5 family. Part of the 50S ribosomal subunit; part of the 5S rRNA/L5/L18/L25 subcomplex. Contacts the 5S rRNA and the P site tRNA. Forms a bridge to the 30S subunit in the 70S ribosome.

In terms of biological role, this is one of the proteins that bind and probably mediate the attachment of the 5S RNA into the large ribosomal subunit, where it forms part of the central protuberance. In the 70S ribosome it contacts protein S13 of the 30S subunit (bridge B1b), connecting the 2 subunits; this bridge is implicated in subunit movement. Contacts the P site tRNA; the 5S rRNA and some of its associated proteins might help stabilize positioning of ribosome-bound tRNAs. In Streptococcus suis (strain 05ZYH33), this protein is Large ribosomal subunit protein uL5.